We begin with the raw amino-acid sequence, 356 residues long: Glutamine synthetase PR-1 (356 aa).

Positions 19–99 constitute a GS beta-grasp domain; that stretch reads VIAEYIWIGG…VICDAYTPAG (81 aa). The tract at residues 41-64 is disordered; it reads PGPVKNPSELPKWNYDGSSTGQAP. Residues 106–356 enclose the GS catalytic domain; that stretch reads KRHNAAKIFS…IADTTILWKP (251 aa).

This sequence belongs to the glutamine synthetase family. As to quaternary structure, homooctamer. As to expression, roots.

Its subcellular location is the cytoplasm. The enzyme catalyses L-glutamate + NH4(+) + ATP = L-glutamine + ADP + phosphate + H(+). The chain is Glutamine synthetase PR-1 from Phaseolus vulgaris (Kidney bean).